Reading from the N-terminus, the 712-residue chain is Translation initiation factor eIF2B subunit epsilon (712 aa).

Residues 1–20 (MAGKKGQKKSGLGNHGKNSD) are disordered. Phosphoserine occurs at positions 478, 481, 507, 525, 538, and 707. The W2 domain occupies 539–710 (EFEDEDFEKE…QNADEESSSE (172 aa)).

Belongs to the eIF-2B gamma/epsilon subunits family. As to quaternary structure, component of the translation initiation factor 2B (eIF2B) complex which is a heterodecamer of two sets of five different subunits: alpha, beta, gamma, delta and epsilon. Subunits alpha, beta and delta comprise a regulatory subcomplex and subunits epsilon and gamma comprise a catalytic subcomplex. Within the complex, the hexameric regulatory complex resides at the center, with the two heterodimeric catalytic subcomplexes bound on opposite sides.

The protein resides in the cytoplasm. It is found in the cytosol. Functionally, acts as a catalytic component of the translation initiation factor 2B (eIF2B) complex, which catalyzes the exchange of GDP for GTP on eukaryotic initiation factor 2 (eIF2) and is regulated by phosphorylated eIF2. Its guanine nucleotide exchange factor activity is repressed when bound to eIF2 complex phosphorylated on the alpha subunit, thereby limiting the amount of methionyl-initiator methionine tRNA available to the ribosome and consequently global translation is repressed. It activates the synthesis of GCN4 in yeast under amino acid starvation conditions by suppressing the inhibitory effects of multiple AUG codons present in the leader of GCN4 mRNA. It may promote either repression or activation of GCN4 expression depending on amino acid availability. GCD6 and GCD7 repress GCN4 expression at the translational level by ensuring that ribosomes which have translated UORF1 will reinitiate at UORF2, -3, or -4 and thus fail to reach the GCN4 start site. In Saccharomyces cerevisiae (strain ATCC 204508 / S288c) (Baker's yeast), this protein is Translation initiation factor eIF2B subunit epsilon (GCD6).